Here is a 363-residue protein sequence, read N- to C-terminus: Copper-containing nitrite reductase (363 aa).

The first 24 residues, Met-1 to Ala-24, serve as a signal peptide directing secretion. Plastocyanin-like domains lie at Gly-25 to Val-193 and Tyr-194 to Gln-363. His-113, His-118, His-153, Cys-154, His-163, Met-168, and His-324 together coordinate Cu cation.

Belongs to the multicopper oxidase family. Homotrimer. The cofactor is Cu(2+). Requires Cu(+) as cofactor. It depends on FAD as a cofactor.

The protein resides in the periplasm. The catalysed reaction is nitric oxide + Fe(III)-[cytochrome c] + H2O = Fe(II)-[cytochrome c] + nitrite + 2 H(+). Its pathway is nitrogen metabolism; nitrate reduction (denitrification); dinitrogen from nitrate: step 2/4. This Pseudomonas chlororaphis (Pseudomonas aureofaciens) protein is Copper-containing nitrite reductase (nirK).